The sequence spans 425 residues: Enolase (425 aa).

Glutamine 162 serves as a coordination point for (2R)-2-phosphoglycerate. Glutamate 204 (proton donor) is an active-site residue. Positions 241, 284, and 311 each coordinate Mg(2+). Positions 336, 365, 366, and 387 each coordinate (2R)-2-phosphoglycerate. The active-site Proton acceptor is lysine 336.

This sequence belongs to the enolase family. The cofactor is Mg(2+).

It localises to the cytoplasm. The protein localises to the secreted. It is found in the cell surface. It carries out the reaction (2R)-2-phosphoglycerate = phosphoenolpyruvate + H2O. Its pathway is carbohydrate degradation; glycolysis; pyruvate from D-glyceraldehyde 3-phosphate: step 4/5. Catalyzes the reversible conversion of 2-phosphoglycerate (2-PG) into phosphoenolpyruvate (PEP). It is essential for the degradation of carbohydrates via glycolysis. This is Enolase from Brucella ovis (strain ATCC 25840 / 63/290 / NCTC 10512).